The following is an 80-amino-acid chain: Clavanin-C (80 aa).

Residues 1 to 19 (MKTTILILLILGLGINAKS) form the signal peptide. Residues 20–29 (LEERKSEEEK) constitute a propeptide that is removed on maturation. F52 is subject to Phenylalanine amide. The propeptide occupies 54–80 (DDQQDNGKFYGHYAEDNGKHWYDTGDQ).

In terms of tissue distribution, hemocytes and pharyngeal tissues.

The protein resides in the secreted. In terms of biological role, has antimicrobial activity against E.coli, L.monocytogenes and C.albicans. This Styela clava (Sea squirt) protein is Clavanin-C.